A 309-amino-acid chain; its full sequence is MTSDVTVGPAPGQYQLSHLRLLEAEAIHVIREVAAEFERPVLLFSGGKDSIVMLHLALKAFRPGRLPFPVMHVDTGHNFDEVIATRDELVAAAGVRLVVASVQDDIDAGRVVETIPSRNPIQTVTLLRAIRENQFDAAFGGARRDEEKARAKERVFSFRDEFGQWDPKAQRPELWNLYNGRHHKGEHIRVFPLSNWTEFDIWSYIGAEQVRLPSIYFAHRRKVFQRDGMLLAVHRHMQPRADEPVFEATVRFRTVGDVTCTGCVESSASTVAEVIAETAVARLTERGATRADDRISEAGMEDRKRQGYF.

This sequence belongs to the PAPS reductase family. CysD subfamily. Heterodimer composed of CysD, the smaller subunit, and CysN.

The catalysed reaction is sulfate + ATP + H(+) = adenosine 5'-phosphosulfate + diphosphate. Its pathway is sulfur metabolism; hydrogen sulfide biosynthesis; sulfite from sulfate: step 1/3. Its function is as follows. With CysN forms the ATP sulfurylase (ATPS) that catalyzes the adenylation of sulfate producing adenosine 5'-phosphosulfate (APS) and diphosphate, the first enzymatic step in sulfur assimilation pathway. APS synthesis involves the formation of a high-energy phosphoric-sulfuric acid anhydride bond driven by GTP hydrolysis by CysN coupled to ATP hydrolysis by CysD. The chain is Sulfate adenylyltransferase subunit 2 from Mycobacterium bovis (strain ATCC BAA-935 / AF2122/97).